The sequence spans 292 residues: Glutamyl-Q tRNA(Asp) synthetase (292 aa).

Residues 9-13 and Glu45 each bind L-glutamate; that span reads RFAPS. Residues 12-22 carry the 'HIGH' region motif; sequence PSPSGPLHAGS. Positions 99, 101, 121, and 125 each coordinate Zn(2+). L-glutamate is bound by residues Tyr184 and Arg202. The 'KMSKS' region signature appears at 240 to 244; sequence KLSKQ. Lys243 lines the ATP pocket.

This sequence belongs to the class-I aminoacyl-tRNA synthetase family. GluQ subfamily. Zn(2+) serves as cofactor.

In terms of biological role, catalyzes the tRNA-independent activation of glutamate in presence of ATP and the subsequent transfer of glutamate onto a tRNA(Asp). Glutamate is transferred on the 2-amino-5-(4,5-dihydroxy-2-cyclopenten-1-yl) moiety of the queuosine in the wobble position of the QUC anticodon. In Verminephrobacter eiseniae (strain EF01-2), this protein is Glutamyl-Q tRNA(Asp) synthetase.